The following is a 104-amino-acid chain: Pterin-4-alpha-carbinolamine dehydratase (104 aa).

An N-acetylalanine modification is found at Ala2. Residues 61-63 and 78-81 contribute to the substrate site; these read DHH and STHE.

This sequence belongs to the pterin-4-alpha-carbinolamine dehydratase family. Homotetramer and homodimer. Heterotetramer with HNF1A; formed by a dimer of dimers. Interacts with HNF1B (via HNF-p1 domain); the interaction increases HNF1B transactivation activity. In terms of tissue distribution, mainly expressed in the liver, in pancreatic cells, and in the kidney, especially in the distal convoluted tubule, in the cortical thick ascending limb of Henle's loop and in the connecting tubule.

Its subcellular location is the cytoplasm. It localises to the nucleus. The catalysed reaction is (4aS,6R)-4a-hydroxy-L-erythro-5,6,7,8-tetrahydrobiopterin = (6R)-L-erythro-6,7-dihydrobiopterin + H2O. Involved in tetrahydrobiopterin biosynthesis. Seems to both prevent the formation of 7-pterins and accelerate the formation of quinonoid-BH2. Coactivator for HNF1A-dependent transcription. Regulates the dimerization of homeodomain protein HNF1A and enhances its transcriptional activity. Also acts as a coactivator for HNF1B-dependent transcription. In Mus musculus (Mouse), this protein is Pterin-4-alpha-carbinolamine dehydratase (Pcbd1).